The following is a 476-amino-acid chain: Cardiolipin synthase (476 aa).

A run of 2 helical transmembrane segments spans residues 2-22 (HLFI…IIFI) and 31-51 (WAWI…YILF). 2 consecutive PLD phosphodiesterase domains span residues 207 to 234 (INYR…GDEY) and 389 to 416 (EKGF…DIRS). Active-site residues include His-212, Lys-214, Asp-219, His-394, Lys-396, and Asp-401.

This sequence belongs to the phospholipase D family. Cardiolipin synthase subfamily.

The protein localises to the cell membrane. The catalysed reaction is 2 a 1,2-diacyl-sn-glycero-3-phospho-(1'-sn-glycerol) = a cardiolipin + glycerol. Catalyzes the reversible phosphatidyl group transfer from one phosphatidylglycerol molecule to another to form cardiolipin (CL) (diphosphatidylglycerol) and glycerol. The protein is Cardiolipin synthase (cls) of Clostridium perfringens (strain ATCC 13124 / DSM 756 / JCM 1290 / NCIMB 6125 / NCTC 8237 / Type A).